Reading from the N-terminus, the 291-residue chain is Undecaprenyl-diphosphatase (291 aa).

The next 8 membrane-spanning stretches (helical) occupy residues 1–21 (MFII…LTEF), 48–68 (SAFT…AWVF), 102–122 (LHVL…DDFI), 126–146 (LFSV…MIIA), 162–182 (ISYF…WPGF), 203–223 (SDFT…LSLL), 231–251 (IADI…GLIA), and 267–287 (FAIY…GFGI).

It belongs to the UppP family.

The protein localises to the cell membrane. The catalysed reaction is di-trans,octa-cis-undecaprenyl diphosphate + H2O = di-trans,octa-cis-undecaprenyl phosphate + phosphate + H(+). Functionally, catalyzes the dephosphorylation of undecaprenyl diphosphate (UPP). Confers resistance to bacitracin. The polypeptide is Undecaprenyl-diphosphatase (Staphylococcus aureus (strain COL)).